Consider the following 510-residue polypeptide: MEEFKRYIELDRSWQHNFFYPLIFQEYIYGFAYDHGLNKSILLENAGDKKYSLLIVKRLINRMYQQTHLILSANHSNQNDFFGHKHKKNLYYQIISEGFAVIVEIPFSLLLISSPEAEENQIVKSHNLRSIHSIFPFFEDKFLHLNYVLEILIPYPIHLEILVQTLRYWVKDASSLHLLRFFLYEYRNWNSLITPQKSNSIFSKRNQRLFLFLYNFHVCEYESIFFFLCNQSSHLRSTSFGALLERNYFYGKLEYLVKVKTFTKDFCLILWLFKDPFLHYVRYRGKSILASKGTSLLMHKWKYYLLNFWQCHFSLWSQPRRIYINRLSKHSLDFMGFFSSVRLNSSVIRSQMVANSFLIDNRIKKFDTIVRIIPLVGSLAKAKFCNVLGHPISKSVWTDLLDSDIIDRFGRICRNLSHYYGGSSRKKSLYRIKYILLLSCARTLARKHKSTVRAFLKRLGSAFLEEFFTTEEEKVLSLILPRDSSISGGLYRGPFWYLDIICIHDLANDE.

It belongs to the intron maturase 2 family. MatK subfamily.

The protein resides in the plastid. It is found in the chloroplast. In terms of biological role, usually encoded in the trnK tRNA gene intron. Probably assists in splicing its own and other chloroplast group II introns. This Mammillaria haageana (Cactus) protein is Maturase K.